A 70-amino-acid chain; its full sequence is Small ribosomal subunit protein bS21B (70 aa).

It belongs to the bacterial ribosomal protein bS21 family.

The protein is Small ribosomal subunit protein bS21B of Cupriavidus metallidurans (strain ATCC 43123 / DSM 2839 / NBRC 102507 / CH34) (Ralstonia metallidurans).